Reading from the N-terminus, the 329-residue chain is Diaminopimelate epimerase (329 aa).

Substrate is bound by residues asparagine 14 and asparagine 73. Residue cysteine 82 is the Proton donor of the active site. Substrate contacts are provided by residues 83-84, asparagine 170, asparagine 206, and 224-225; these read GN and ER. The active-site Proton acceptor is the cysteine 233. Substrate is bound at residue 234 to 235; that stretch reads GT.

Belongs to the diaminopimelate epimerase family. Homodimer.

Its subcellular location is the cytoplasm. The enzyme catalyses (2S,6S)-2,6-diaminopimelate = meso-2,6-diaminopimelate. The protein operates within amino-acid biosynthesis; L-lysine biosynthesis via DAP pathway; DL-2,6-diaminopimelate from LL-2,6-diaminopimelate: step 1/1. In terms of biological role, catalyzes the stereoinversion of LL-2,6-diaminopimelate (L,L-DAP) to meso-diaminopimelate (meso-DAP), a precursor of L-lysine and an essential component of the bacterial peptidoglycan. The chain is Diaminopimelate epimerase from Listeria monocytogenes serotype 4a (strain HCC23).